We begin with the raw amino-acid sequence, 472 residues long: Siroheme synthase (472 aa).

The segment at 1 to 203 (MNYLPIFIDI…GKIQEAKADL (203 aa)) is precorrin-2 dehydrogenase /sirohydrochlorin ferrochelatase. Residues 22–23 (DI) and 43–44 (KS) contribute to the NAD(+) site. A Phosphoserine modification is found at S128. Positions 216–472 (GEVYLVGGGP…SSKKSYLFGG (257 aa)) are uroporphyrinogen-III C-methyltransferase. P225 lines the S-adenosyl-L-methionine pocket. D248 serves as the catalytic Proton acceptor. K270 functions as the Proton donor in the catalytic mechanism. Residues 301 to 303 (GGD), I306, 331 to 332 (TA), M383, and G412 each bind S-adenosyl-L-methionine.

The protein in the N-terminal section; belongs to the precorrin-2 dehydrogenase / sirohydrochlorin ferrochelatase family. In the C-terminal section; belongs to the precorrin methyltransferase family.

The enzyme catalyses uroporphyrinogen III + 2 S-adenosyl-L-methionine = precorrin-2 + 2 S-adenosyl-L-homocysteine + H(+). It carries out the reaction precorrin-2 + NAD(+) = sirohydrochlorin + NADH + 2 H(+). The catalysed reaction is siroheme + 2 H(+) = sirohydrochlorin + Fe(2+). The protein operates within cofactor biosynthesis; adenosylcobalamin biosynthesis; precorrin-2 from uroporphyrinogen III: step 1/1. It functions in the pathway cofactor biosynthesis; adenosylcobalamin biosynthesis; sirohydrochlorin from precorrin-2: step 1/1. It participates in porphyrin-containing compound metabolism; siroheme biosynthesis; precorrin-2 from uroporphyrinogen III: step 1/1. Its pathway is porphyrin-containing compound metabolism; siroheme biosynthesis; siroheme from sirohydrochlorin: step 1/1. The protein operates within porphyrin-containing compound metabolism; siroheme biosynthesis; sirohydrochlorin from precorrin-2: step 1/1. In terms of biological role, multifunctional enzyme that catalyzes the SAM-dependent methylations of uroporphyrinogen III at position C-2 and C-7 to form precorrin-2 via precorrin-1. Then it catalyzes the NAD-dependent ring dehydrogenation of precorrin-2 to yield sirohydrochlorin. Finally, it catalyzes the ferrochelation of sirohydrochlorin to yield siroheme. This chain is Siroheme synthase, found in Ruthia magnifica subsp. Calyptogena magnifica.